The sequence spans 289 residues: Protoheme IX farnesyltransferase (289 aa).

The next 9 helical transmembrane spans lie at 18–38 (VTSL…EQSP), 40–60 (GFLI…SFIF), 87–107 (VVQA…VLAV), 111–131 (LLTA…YTIF), 139–159 (NIVI…AAIG), 168–188 (SLFM…AIFL), 212–232 (SIFF…FLES), 234–254 (MGFL…ILSY), and 269–289 (FFFS…DHLI).

It belongs to the UbiA prenyltransferase family. Protoheme IX farnesyltransferase subfamily.

It localises to the cell inner membrane. The enzyme catalyses heme b + (2E,6E)-farnesyl diphosphate + H2O = Fe(II)-heme o + diphosphate. The protein operates within porphyrin-containing compound metabolism; heme O biosynthesis; heme O from protoheme: step 1/1. Its function is as follows. Converts heme B (protoheme IX) to heme O by substitution of the vinyl group on carbon 2 of heme B porphyrin ring with a hydroxyethyl farnesyl side group. The sequence is that of Protoheme IX farnesyltransferase from Leptospira interrogans serogroup Icterohaemorrhagiae serovar copenhageni (strain Fiocruz L1-130).